Consider the following 542-residue polypeptide: Chaperonin GroEL (542 aa).

ATP-binding positions include 29 to 32 (TLGP), 86 to 90 (DGTTT), G413, 476 to 478 (NAA), and D492. Residues 522-542 (PDENGPAAVPDMGMGGMGGMM) are disordered.

The protein belongs to the chaperonin (HSP60) family. As to quaternary structure, forms a cylinder of 14 subunits composed of two heptameric rings stacked back-to-back. Interacts with the co-chaperonin GroES.

It is found in the cytoplasm. It carries out the reaction ATP + H2O + a folded polypeptide = ADP + phosphate + an unfolded polypeptide.. Its function is as follows. Together with its co-chaperonin GroES, plays an essential role in assisting protein folding. The GroEL-GroES system forms a nano-cage that allows encapsulation of the non-native substrate proteins and provides a physical environment optimized to promote and accelerate protein folding. The sequence is that of Chaperonin GroEL from Listeria monocytogenes serotype 4b (strain CLIP80459).